The sequence spans 532 residues: CTP synthase (532 aa).

The tract at residues 1–267 (MTKYIFVTGG…DDIVLEHLQL (267 aa)) is amidoligase domain. Ser13 is a CTP binding site. Ser13 is a binding site for UTP. 14–19 (SIGKGI) serves as a coordination point for ATP. Residue Tyr54 coordinates L-glutamine. Asp71 contributes to the ATP binding site. Positions 71 and 141 each coordinate Mg(2+). CTP is bound by residues 148-150 (DIE), 188-193 (KTKPTQ), and Lys224. Residues 188-193 (KTKPTQ) and Lys224 each bind UTP. Positions 292-532 (RIGLVGKYVS…DFVGAALNNK (241 aa)) constitute a Glutamine amidotransferase type-1 domain. Gly354 contributes to the L-glutamine binding site. Cys381 functions as the Nucleophile; for glutamine hydrolysis in the catalytic mechanism. Residues 382–385 (LGMQ), Glu405, and Arg462 contribute to the L-glutamine site. Active-site residues include His507 and Glu509.

The protein belongs to the CTP synthase family. In terms of assembly, homotetramer.

It catalyses the reaction UTP + L-glutamine + ATP + H2O = CTP + L-glutamate + ADP + phosphate + 2 H(+). The enzyme catalyses L-glutamine + H2O = L-glutamate + NH4(+). The catalysed reaction is UTP + NH4(+) + ATP = CTP + ADP + phosphate + 2 H(+). Its pathway is pyrimidine metabolism; CTP biosynthesis via de novo pathway; CTP from UDP: step 2/2. Allosterically activated by GTP, when glutamine is the substrate; GTP has no effect on the reaction when ammonia is the substrate. The allosteric effector GTP functions by stabilizing the protein conformation that binds the tetrahedral intermediate(s) formed during glutamine hydrolysis. Inhibited by the product CTP, via allosteric rather than competitive inhibition. In terms of biological role, catalyzes the ATP-dependent amination of UTP to CTP with either L-glutamine or ammonia as the source of nitrogen. Regulates intracellular CTP levels through interactions with the four ribonucleotide triphosphates. The chain is CTP synthase from Listeria innocua serovar 6a (strain ATCC BAA-680 / CLIP 11262).